The primary structure comprises 307 residues: UDP-3-O-acyl-N-acetylglucosamine deacetylase (307 aa).

Zn(2+) is bound by residues histidine 80, histidine 239, and aspartate 243. The active-site Proton donor is histidine 266.

This sequence belongs to the LpxC family. Zn(2+) serves as cofactor.

The enzyme catalyses a UDP-3-O-[(3R)-3-hydroxyacyl]-N-acetyl-alpha-D-glucosamine + H2O = a UDP-3-O-[(3R)-3-hydroxyacyl]-alpha-D-glucosamine + acetate. It functions in the pathway glycolipid biosynthesis; lipid IV(A) biosynthesis; lipid IV(A) from (3R)-3-hydroxytetradecanoyl-[acyl-carrier-protein] and UDP-N-acetyl-alpha-D-glucosamine: step 2/6. Catalyzes the hydrolysis of UDP-3-O-myristoyl-N-acetylglucosamine to form UDP-3-O-myristoylglucosamine and acetate, the committed step in lipid A biosynthesis. The polypeptide is UDP-3-O-acyl-N-acetylglucosamine deacetylase (Neisseria meningitidis serogroup A / serotype 4A (strain DSM 15465 / Z2491)).